Here is a 127-residue protein sequence, read N- to C-terminus: Large ribosomal subunit protein uL22 (127 aa).

The protein belongs to the universal ribosomal protein uL22 family. In terms of assembly, part of the 50S ribosomal subunit.

Functionally, this protein binds specifically to 23S rRNA; its binding is stimulated by other ribosomal proteins, e.g. L4, L17, and L20. It is important during the early stages of 50S assembly. It makes multiple contacts with different domains of the 23S rRNA in the assembled 50S subunit and ribosome. In terms of biological role, the globular domain of the protein is located near the polypeptide exit tunnel on the outside of the subunit, while an extended beta-hairpin is found that lines the wall of the exit tunnel in the center of the 70S ribosome. This is Large ribosomal subunit protein uL22 from Methylobacterium nodulans (strain LMG 21967 / CNCM I-2342 / ORS 2060).